The primary structure comprises 428 residues: MSAIVDIIGREILDSRGNPTVECDVLLESGAMGRAAVPSGASTGTREAIELRDGDKNRYFGKGVLRAVENLNTEISEALMGLDAQEQTFVDRTLIELDGTDSKERLGANAMLAASMAVARAAADESGLSLYRYFGGSGPMSMPVPMMNVINGGAHANNTLDLQELMILPVGAASFREALRWGAEVFHVLKKLIHAQGMSTAVGDEGGFAPNLANHEAAIQLILKAITEAGYEPGTQIALGLDCASSEFYRDGKYTLAGEGGVSLSSQEFANLLATWCDKYPIISIEDGMAENDWDGWKLLTDQLGKKVQLVGDDLFVTNTRILREGIQKGVANSILIKINQIGTLTETFAAIEMAKRAGYTAVVSHRSGETEDSTIADIAVATNAMQIKTGSLSRSDRMAKYNQLLRIEEELAEVASYPGIEAFYNLR.

Residue Gln-163 coordinates (2R)-2-phosphoglycerate. The active-site Proton donor is the Glu-205. Mg(2+) contacts are provided by Asp-242, Glu-286, and Asp-313. Residues Lys-338, Arg-367, Ser-368, and Lys-389 each contribute to the (2R)-2-phosphoglycerate site. Lys-338 functions as the Proton acceptor in the catalytic mechanism.

This sequence belongs to the enolase family. Mg(2+) is required as a cofactor.

It is found in the cytoplasm. The protein localises to the secreted. Its subcellular location is the cell surface. It carries out the reaction (2R)-2-phosphoglycerate = phosphoenolpyruvate + H2O. The protein operates within carbohydrate degradation; glycolysis; pyruvate from D-glyceraldehyde 3-phosphate: step 4/5. Functionally, catalyzes the reversible conversion of 2-phosphoglycerate (2-PG) into phosphoenolpyruvate (PEP). It is essential for the degradation of carbohydrates via glycolysis. This chain is Enolase, found in Bordetella avium (strain 197N).